The following is an 80-amino-acid chain: Small ribosomal subunit protein bS18 (80 aa).

It belongs to the bacterial ribosomal protein bS18 family. Part of the 30S ribosomal subunit. Forms a tight heterodimer with protein bS6.

In terms of biological role, binds as a heterodimer with protein bS6 to the central domain of the 16S rRNA, where it helps stabilize the platform of the 30S subunit. The polypeptide is Small ribosomal subunit protein bS18 (Beijerinckia indica subsp. indica (strain ATCC 9039 / DSM 1715 / NCIMB 8712)).